Here is a 538-residue protein sequence, read N- to C-terminus: Putative cysteine ligase BshC (538 aa).

The stretch at 248–268 (ISKYKEVQEGLRNQQEVIKEL) forms a coiled coil.

This sequence belongs to the BshC family.

Functionally, involved in bacillithiol (BSH) biosynthesis. May catalyze the last step of the pathway, the addition of cysteine to glucosamine malate (GlcN-Mal) to generate BSH. This is Putative cysteine ligase BshC from Bacillus cereus (strain B4264).